The chain runs to 122 residues: Large ribosomal subunit protein uL14 (122 aa).

The protein belongs to the universal ribosomal protein uL14 family. As to quaternary structure, part of the 50S ribosomal subunit. Forms a cluster with proteins L3 and L19. In the 70S ribosome, L14 and L19 interact and together make contacts with the 16S rRNA in bridges B5 and B8.

Functionally, binds to 23S rRNA. Forms part of two intersubunit bridges in the 70S ribosome. The sequence is that of Large ribosomal subunit protein uL14 from Syntrophomonas wolfei subsp. wolfei (strain DSM 2245B / Goettingen).